Reading from the N-terminus, the 226-residue chain is Ribose-5-phosphate isomerase A (226 aa).

Residues 32–35 (TGST), 85–88 (DGAD), and 98–101 (KGGG) each bind substrate. Glu107 functions as the Proton acceptor in the catalytic mechanism. Lys125 serves as a coordination point for substrate.

It belongs to the ribose 5-phosphate isomerase family. In terms of assembly, homodimer.

The catalysed reaction is aldehydo-D-ribose 5-phosphate = D-ribulose 5-phosphate. Its pathway is carbohydrate degradation; pentose phosphate pathway; D-ribose 5-phosphate from D-ribulose 5-phosphate (non-oxidative stage): step 1/1. Catalyzes the reversible conversion of ribose-5-phosphate to ribulose 5-phosphate. The protein is Ribose-5-phosphate isomerase A of Saccharophagus degradans (strain 2-40 / ATCC 43961 / DSM 17024).